A 396-amino-acid polypeptide reads, in one-letter code: Elongation factor Tu (396 aa).

The region spanning 10 to 206 is the tr-type G domain; that stretch reads KPHVNIGTIG…AVDESVPDPI (197 aa). Residues 19-26 form a G1 region; that stretch reads GHVDHGKT. 19–26 is a GTP binding site; sequence GHVDHGKT. Thr26 contributes to the Mg(2+) binding site. The segment at 62–66 is G2; sequence GITIN. The G3 stretch occupies residues 83-86; that stretch reads DAPG. GTP is bound by residues 83–87 and 138–141; these read DAPGH and NKSD. The tract at residues 138–141 is G4; it reads NKSD. Residues 176–178 form a G5 region; it reads SGL.

This sequence belongs to the TRAFAC class translation factor GTPase superfamily. Classic translation factor GTPase family. EF-Tu/EF-1A subfamily. Monomer.

Its subcellular location is the cytoplasm. It catalyses the reaction GTP + H2O = GDP + phosphate + H(+). Functionally, GTP hydrolase that promotes the GTP-dependent binding of aminoacyl-tRNA to the A-site of ribosomes during protein biosynthesis. The chain is Elongation factor Tu from Renibacterium salmoninarum (strain ATCC 33209 / DSM 20767 / JCM 11484 / NBRC 15589 / NCIMB 2235).